The sequence spans 1037 residues: Signal-induced proliferation-associated protein 1 (1037 aa).

Positions 1 to 85 (MWAGGVGSPR…ASRPAATPTR (85 aa)) are disordered. Thr-62 is modified (phosphothreonine). Phosphoserine occurs at positions 65, 178, 299, and 309. The 219-residue stretch at 316-534 (LLTLDEQVLS…RTRQQYLQDL (219 aa)) folds into the Rap-GAP domain. Residues 682–758 (ELALPRDGQG…VCVTVLPPDE (77 aa)) form the PDZ domain. Ser-812 and Ser-834 each carry phosphoserine. Disordered stretches follow at residues 830 to 849 (HNSL…LPNT) and 855 to 898 (LVTT…ASIL). Over residues 871-881 (PPSQDQSGSPS) the composition is skewed to low complexity. Ser-907 carries the phosphoserine modification. The tract at residues 943-969 (REGQPISESGDPKEALKCDSEPEPGSL) is disordered. Basic and acidic residues predominate over residues 952 to 962 (GDPKEALKCDS). Positions 968–1025 (SLSEKVSHLESMLWKLQEDLQREKADRAALEEEVRSLRHNNQRLLAESESAATRLLLA) form a coiled coil.

Interacts with RRP1B; the interaction leads to inhibition of SIPA1 GTPase activity. In terms of tissue distribution, preferentially expressed in both fetal and adult lymphohematopoietic tissues.

It localises to the nucleus. Its subcellular location is the cytoplasm. It is found in the perinuclear region. The protein localises to the endomembrane system. In terms of biological role, GTPase activator for the nuclear Ras-related regulatory proteins Rap1, Rsr1 and Ran in vitro, converting them to the putatively inactive GDP-bound state. Affects cell cycle progression. The chain is Signal-induced proliferation-associated protein 1 (Sipa1) from Mus musculus (Mouse).